Consider the following 304-residue polypeptide: Non-specific ribonucleoside hydrolase RihC (304 aa).

The active site involves His233.

Belongs to the IUNH family. RihC subfamily.

Hydrolyzes both purine and pyrimidine ribonucleosides with a broad-substrate specificity. This is Non-specific ribonucleoside hydrolase RihC from Escherichia coli O45:K1 (strain S88 / ExPEC).